Reading from the N-terminus, the 62-residue chain is Photosystem II reaction center protein Z (62 aa).

Helical transmembrane passes span 8–28 (LVVALIVYSFVLIVAVPITLS) and 41–61 (VTASIGWVGMVLLTGVLNSFV).

Belongs to the PsbZ family. As to quaternary structure, PSII is composed of 1 copy each of membrane proteins PsbA, PsbB, PsbC, PsbD, PsbE, PsbF, PsbH, PsbI, PsbJ, PsbK, PsbL, PsbM, PsbT, PsbX, PsbY, PsbZ, Psb30/Ycf12, at least 3 peripheral proteins of the oxygen-evolving complex and a large number of cofactors. It forms dimeric complexes.

The protein resides in the plastid. The protein localises to the chloroplast thylakoid membrane. Functionally, may control the interaction of photosystem II (PSII) cores with the light-harvesting antenna, regulates electron flow through the 2 photosystem reaction centers. PSII is a light-driven water plastoquinone oxidoreductase, using light energy to abstract electrons from H(2)O, generating a proton gradient subsequently used for ATP formation. This chain is Photosystem II reaction center protein Z, found in Cyanidioschyzon merolae (strain NIES-3377 / 10D) (Unicellular red alga).